Here is a 78-residue protein sequence, read N- to C-terminus: DNA-directed RNA polymerase subunit Rpo5 (78 aa).

The protein belongs to the archaeal Rpo5/eukaryotic RPB5 RNA polymerase subunit family. As to quaternary structure, part of the RNA polymerase complex.

Its subcellular location is the cytoplasm. The enzyme catalyses RNA(n) + a ribonucleoside 5'-triphosphate = RNA(n+1) + diphosphate. In terms of biological role, DNA-dependent RNA polymerase (RNAP) catalyzes the transcription of DNA into RNA using the four ribonucleoside triphosphates as substrates. This chain is DNA-directed RNA polymerase subunit Rpo5, found in Methanosarcina acetivorans (strain ATCC 35395 / DSM 2834 / JCM 12185 / C2A).